The primary structure comprises 160 residues: uncharacterized protein (160 aa).

The span at 1–31 (METEKPNTDVKVAQDLEKLKLDEKHKDEKKD) shows a compositional bias: basic and acidic residues. Residues 1-160 (METEKPNTDV…DKKDKEHKKE (160 aa)) are disordered. Residues 20–111 (KLDEKHKDEK…KSKLEGKKDK (92 aa)) are a coiled coil. The span at 32–42 (KKDKKDKKDKK) shows a compositional bias: basic residues. Residues 43 to 160 (DKKEKTPEEI…DKKDKEHKKE (118 aa)) show a composition bias toward basic and acidic residues.

This is an uncharacterized protein from Dictyostelium discoideum (Social amoeba).